Here is a 494-residue protein sequence, read N- to C-terminus: SNF1-related protein kinase catalytic subunit alpha KIN12 (494 aa).

In terms of domain architecture, Protein kinase spans 19–270 (YRIGKTLGHG…ITEIRQHPWF (252 aa)). Residues 25 to 33 (LGHGSFAKV) and lysine 48 contribute to the ATP site. Aspartate 142 (proton acceptor) is an active-site residue. Phosphothreonine is present on threonine 175. Positions 289 to 386 (AKKIEEEIIQ…GLKSNVKDDK (98 aa)) are auto-inhibitory domain (AID). In terms of domain architecture, UBA spans 291–331 (KIEEEIIQNVVNIGFDRNHVVDSLANRIQNEATVAYHLILD). Residues 293–494 (EEEIIQNVVN…VAFLRELGVL (202 aa)) are regulatory domain (RD). The segment at 387 to 494 (TWTLGLQSQG…VAFLRELGVL (108 aa)) is PPI. In terms of domain architecture, KA1 spans 445 to 493 (AIILPTVIKFEIQLYKVREGKYLLDILRIDGPQFIFFDLCVAFLRELGV).

The protein belongs to the protein kinase superfamily. CAMK Ser/Thr protein kinase family. SNF1 subfamily. Subunit of a probable heterotrimeric complex consisting of an alpha catalytic subunit, and a beta (KINB) and a gamma (KING or SNF4) non-catalytic regulatory subunits. Autophosphorylated. In terms of tissue distribution, expressed at very low levels.

The catalysed reaction is L-seryl-[protein] + ATP = O-phospho-L-seryl-[protein] + ADP + H(+). The enzyme catalyses L-threonyl-[protein] + ATP = O-phospho-L-threonyl-[protein] + ADP + H(+). Activated by phosphorylation at Thr-175. In terms of biological role, catalytic subunit of the probable trimeric SNF1-related protein kinase (SnRK) complex, a central regulator of cellular energy homeostasis, which, in response to seemingly unrelated darkness, sugar and stress conditions, activates energy-producing pathways and inhibits energy-consuming processes. May also be involved in the regulation of fatty acid synthesis by phosphorylation of acetyl-CoA carboxylase and in assimilation of nitrogen by phosphorylating nitrate reductase. In Arabidopsis thaliana (Mouse-ear cress), this protein is SNF1-related protein kinase catalytic subunit alpha KIN12.